The primary structure comprises 434 residues: Serine--tRNA ligase (434 aa).

239-241 (TAE) provides a ligand contact to L-serine. ATP is bound at residue 270-272 (RSE). Glutamate 293 provides a ligand contact to L-serine. 357–360 (EISS) provides a ligand contact to ATP. Serine 393 provides a ligand contact to L-serine.

Belongs to the class-II aminoacyl-tRNA synthetase family. Type-1 seryl-tRNA synthetase subfamily. In terms of assembly, homodimer. The tRNA molecule binds across the dimer.

The protein localises to the cytoplasm. The enzyme catalyses tRNA(Ser) + L-serine + ATP = L-seryl-tRNA(Ser) + AMP + diphosphate + H(+). It catalyses the reaction tRNA(Sec) + L-serine + ATP = L-seryl-tRNA(Sec) + AMP + diphosphate + H(+). It functions in the pathway aminoacyl-tRNA biosynthesis; selenocysteinyl-tRNA(Sec) biosynthesis; L-seryl-tRNA(Sec) from L-serine and tRNA(Sec): step 1/1. Functionally, catalyzes the attachment of serine to tRNA(Ser). Is also able to aminoacylate tRNA(Sec) with serine, to form the misacylated tRNA L-seryl-tRNA(Sec), which will be further converted into selenocysteinyl-tRNA(Sec). The polypeptide is Serine--tRNA ligase (Mesorhizobium japonicum (strain LMG 29417 / CECT 9101 / MAFF 303099) (Mesorhizobium loti (strain MAFF 303099))).